A 44-amino-acid chain; its full sequence is Large ribosomal subunit protein bL34 (44 aa).

Belongs to the bacterial ribosomal protein bL34 family.

This chain is Large ribosomal subunit protein bL34, found in Buchnera aphidicola subsp. Cinara cedri (strain Cc).